We begin with the raw amino-acid sequence, 173 residues long: Glutamyl-tRNA(Gln) amidotransferase subunit C-1, mitochondrial (173 aa).

The N-terminal 23 residues, 1 to 23 (MIRIPFRLRPPPGRTLHSLVRTF), are a transit peptide targeting the mitochondrion. The disordered stretch occupies residues 51–70 (PSKVPQRPHKSTTTVGQSTP). Residues 61–70 (STTTVGQSTP) show a composition bias toward polar residues.

The protein belongs to the GatC family. Subunit of the heterotrimeric GatCAB amidotransferase (AdT) complex, composed of A, B and C subunits.

It localises to the mitochondrion. The enzyme catalyses L-glutamyl-tRNA(Gln) + L-glutamine + ATP + H2O = L-glutaminyl-tRNA(Gln) + L-glutamate + ADP + phosphate + H(+). Allows the formation of correctly charged Gln-tRNA(Gln) through the transamidation of misacylated Glu-tRNA(Gln) in the mitochondria. The reaction takes place in the presence of glutamine and ATP through an activated gamma-phospho-Glu-tRNA(Gln). The polypeptide is Glutamyl-tRNA(Gln) amidotransferase subunit C-1, mitochondrial (Culex quinquefasciatus (Southern house mosquito)).